Consider the following 237-residue polypeptide: Phosphoribosylaminoimidazole-succinocarboxamide synthase (237 aa).

Belongs to the SAICAR synthetase family.

The enzyme catalyses 5-amino-1-(5-phospho-D-ribosyl)imidazole-4-carboxylate + L-aspartate + ATP = (2S)-2-[5-amino-1-(5-phospho-beta-D-ribosyl)imidazole-4-carboxamido]succinate + ADP + phosphate + 2 H(+). The protein operates within purine metabolism; IMP biosynthesis via de novo pathway; 5-amino-1-(5-phospho-D-ribosyl)imidazole-4-carboxamide from 5-amino-1-(5-phospho-D-ribosyl)imidazole-4-carboxylate: step 1/2. In Citrobacter koseri (strain ATCC BAA-895 / CDC 4225-83 / SGSC4696), this protein is Phosphoribosylaminoimidazole-succinocarboxamide synthase.